Reading from the N-terminus, the 282-residue chain is NAD kinase (282 aa).

The active-site Proton acceptor is the Asp67. Residues 67–68 (DG), 140–141 (NE), His151, Arg170, Asp172, and 183–188 (TAYNLS) contribute to the NAD(+) site.

It belongs to the NAD kinase family. Requires a divalent metal cation as cofactor.

It is found in the cytoplasm. The catalysed reaction is NAD(+) + ATP = ADP + NADP(+) + H(+). Functionally, involved in the regulation of the intracellular balance of NAD and NADP, and is a key enzyme in the biosynthesis of NADP. Catalyzes specifically the phosphorylation on 2'-hydroxyl of the adenosine moiety of NAD to yield NADP. The polypeptide is NAD kinase (Halobacterium salinarum (strain ATCC 700922 / JCM 11081 / NRC-1) (Halobacterium halobium)).